The chain runs to 380 residues: Flap endonuclease 1 (380 aa).

Residues 1 to 104 (MGIQGLAKLI…GELAKRSERR (104 aa)) are N-domain. Arg-19 is modified (symmetric dimethylarginine; by PRMT5). Asp-34 provides a ligand contact to Mg(2+). DNA contacts are provided by Arg-47 and Arg-70. N6-acetyllysine is present on Lys-80. Asp-86 serves as a coordination point for Mg(2+). Symmetric dimethylarginine; by PRMT5 is present on residues Arg-100 and Arg-104. An I-domain region spans residues 122–253 (EVEKFTKRLV…KRAVDLIQKH (132 aa)). Mg(2+) contacts are provided by Glu-158, Glu-160, Asp-179, and Asp-181. Glu-158 contacts DNA. The residue at position 187 (Ser-187) is a Phosphoserine; by CDK2. Symmetric dimethylarginine; by PRMT5 is present on Arg-192. Ser-197 carries the phosphoserine modification. 2 residues coordinate DNA: Gly-231 and Asp-233. Asp-233 contacts Mg(2+). Residues Ser-255, Ser-293, and Ser-335 each carry the phosphoserine modification. Thr-336 carries the phosphothreonine modification. The interval 336–344 (TQGRLDDFF) is interaction with PCNA. The interval 349–380 (SLSSAKRKEPEPKGAAKKKQRLGPAGKFKRGK) is disordered. An N6-acetyllysine mark is found at Lys-354, Lys-375, Lys-377, and Lys-380. Basic residues predominate over residues 363-380 (AAKKKQRLGPAGKFKRGK).

It belongs to the XPG/RAD2 endonuclease family. FEN1 subfamily. In terms of assembly, interacts with PCNA. Three molecules of FEN1 bind to one PCNA trimer with each molecule binding to one PCNA monomer. PCNA stimulates the nuclease activity without altering cleavage specificity. The C-terminal domain binds EP300; can bind simultaneously to both PCNA and EP300. Interacts with DDX11; this interaction is direct and increases flap endonuclease activity of FEN1. Interacts with WDR4; regulating its endonuclease activity. Interacts with POLB. The cofactor is Mg(2+). Acetylated by EP300. Acetylation inhibits both endonuclease and exonuclease activity. Acetylation also reduces DNA-binding activity but does not affect interaction with PCNA or EP300. Post-translationally, phosphorylation upon DNA damage induces relocalization to the nuclear plasma. Phosphorylation at Ser-187 by CDK2 occurs during late S-phase and results in dissociation from PCNA. In terms of processing, methylation at Arg-192 by PRMT5 impedes Ser-187 phosphorylation and increases interaction with PCNA.

Its subcellular location is the nucleus. The protein localises to the nucleolus. The protein resides in the nucleoplasm. It is found in the mitochondrion. Functionally, structure-specific nuclease with 5'-flap endonuclease and 5'-3' exonuclease activities involved in DNA replication and repair. During DNA replication, cleaves the 5'-overhanging flap structure that is generated by displacement synthesis when DNA polymerase encounters the 5'-end of a downstream Okazaki fragment. It enters the flap from the 5'-end and then tracks to cleave the flap base, leaving a nick for ligation. Also involved in the long patch base excision repair (LP-BER) pathway, by cleaving within the apurinic/apyrimidinic (AP) site-terminated flap. Acts as a genome stabilization factor that prevents flaps from equilibrating into structures that lead to duplications and deletions. Also possesses 5'-3' exonuclease activity on nicked or gapped double-stranded DNA, and exhibits RNase H activity. Also involved in replication and repair of rDNA and in repairing mitochondrial DNA. The sequence is that of Flap endonuclease 1 from Ovis aries (Sheep).